Here is a 482-residue protein sequence, read N- to C-terminus: Mannose-1-phosphate guanylyltransferase 2 (482 aa).

The protein belongs to the mannose-6-phosphate isomerase type 2 family.

The catalysed reaction is alpha-D-mannose 1-phosphate + GTP + H(+) = GDP-alpha-D-mannose + diphosphate. The protein operates within nucleotide-sugar biosynthesis; GDP-alpha-D-mannose biosynthesis; GDP-alpha-D-mannose from alpha-D-mannose 1-phosphate (GTP route): step 1/1. Involved in GDP-mannose biosynthesis which serves as the activated sugar nucleotide precursor for mannose residues in cell surface polysaccharides. This enzyme participates in synthesis of the LPS O antigen. This is Mannose-1-phosphate guanylyltransferase 2 (manC2) from Escherichia coli O157:H7.